Here is a 129-residue protein sequence, read N- to C-terminus: Protein 2B* (129 aa).

2 disordered regions span residues 1–28 (PFTF…NPTA) and 91–129 (DCRD…RNSS). A compositionally biased stretch (polar residues) spans 14-28 (DSRSGSVINGSNPTA). The span at 99–113 (DASGPLDAALLGSLD) shows a compositional bias: low complexity. The segment covering 114 to 129 (SSRDHKPDKPVRRNSS) has biased composition (basic and acidic residues).

Belongs to the encephalomyocarditis virus protein 2B* family.

The chain is Protein 2B* from Homo sapiens (Human).